We begin with the raw amino-acid sequence, 339 residues long: MNQRNASMTVIGAGSYGTALAITLARNGHEVVLWGHDPEHIATLERDRCNAAFLPDVPFPDTLHLESDLATALAASRNILVVVPSHVFGEVLRQIKPLMRPDARLVWATKGLEAETGRLLQDVAREALGDQIPLAVISGPTFAKELAAGLPTAISLASTDQTFADDLQQLLHCGKSFRVYSNPDFIGVQLGGAVKNVIAIGAGMSDGIGFGANARTALITRGLAEMSRLGAALGAEPATFMGMAGLGDLVLTCTDNQSRNRRFGMMLGQGMDVQSAQEKIGQVVEGYRNTKEVRELAHRFGVEMPITEEIYQVLYCGKNAREAALTLLGRARKDERSSH.

Positions 15, 16, 36, and 110 each coordinate NADPH. Sn-glycerol 3-phosphate-binding residues include lysine 110, glycine 139, and threonine 141. Residue alanine 143 participates in NADPH binding. Residues lysine 195, aspartate 248, serine 258, arginine 259, and asparagine 260 each coordinate sn-glycerol 3-phosphate. Lysine 195 (proton acceptor) is an active-site residue. Arginine 259 serves as a coordination point for NADPH. The NADPH site is built by valine 283 and glutamate 285.

It belongs to the NAD-dependent glycerol-3-phosphate dehydrogenase family.

Its subcellular location is the cytoplasm. The catalysed reaction is sn-glycerol 3-phosphate + NAD(+) = dihydroxyacetone phosphate + NADH + H(+). It carries out the reaction sn-glycerol 3-phosphate + NADP(+) = dihydroxyacetone phosphate + NADPH + H(+). The protein operates within membrane lipid metabolism; glycerophospholipid metabolism. In terms of biological role, catalyzes the reduction of the glycolytic intermediate dihydroxyacetone phosphate (DHAP) to sn-glycerol 3-phosphate (G3P), the key precursor for phospholipid synthesis. This is Glycerol-3-phosphate dehydrogenase [NAD(P)+] from Shigella boydii serotype 18 (strain CDC 3083-94 / BS512).